Reading from the N-terminus, the 775-residue chain is Dipeptidyl peptidase 4 (775 aa).

An N-terminal signal peptide occupies residues 1–15; the sequence is MKLLSLLMLAGIAQA. N-linked (GlcNAc...) asparagine glycans are attached at residues asparagine 81, asparagine 111, asparagine 154, and asparagine 219. Catalysis depends on charge relay system residues serine 613, aspartate 690, and histidine 725.

The protein belongs to the peptidase S9B family.

The protein resides in the secreted. It catalyses the reaction Release of an N-terminal dipeptide, Xaa-Yaa-|-Zaa-, from a polypeptide, preferentially when Yaa is Pro, provided Zaa is neither Pro nor hydroxyproline.. Extracellular dipeptidyl-peptidase which removes N-terminal dipeptides sequentially from polypeptides having unsubstituted N-termini provided that the penultimate residue is proline. Contributes to pathogenicity. This Trichophyton rubrum (Athlete's foot fungus) protein is Dipeptidyl peptidase 4 (DPP4).